Reading from the N-terminus, the 66-residue chain is Transmembrane protein B66L (66 aa).

The first 20 residues, 1 to 20, serve as a signal peptide directing secretion; it reads MDIKRALILFLLFLVVLSNA. Over 21–40 the chain is Extracellular; the sequence is FVDYIISNFNHAVTCRKPTY. Residues 41–61 form a helical membrane-spanning segment; sequence FGIVLQGIFLVILFSIVDYLI. Topologically, residues 62-66 are cytoplasmic; the sequence is NENIL.

This sequence belongs to the asfivirus B66L family.

It localises to the host membrane. This is Transmembrane protein B66L from Ornithodoros (relapsing fever ticks).